Reading from the N-terminus, the 386-residue chain is Methylthioribose-1-phosphate isomerase (386 aa).

Catalysis depends on D261, which acts as the Proton donor.

The protein belongs to the eIF-2B alpha/beta/delta subunits family. MtnA subfamily.

The protein localises to the cytoplasm. It is found in the nucleus. The catalysed reaction is 5-(methylsulfanyl)-alpha-D-ribose 1-phosphate = 5-(methylsulfanyl)-D-ribulose 1-phosphate. It participates in amino-acid biosynthesis; L-methionine biosynthesis via salvage pathway; L-methionine from S-methyl-5-thio-alpha-D-ribose 1-phosphate: step 1/6. Its function is as follows. Catalyzes the interconversion of methylthioribose-1-phosphate (MTR-1-P) into methylthioribulose-1-phosphate (MTRu-1-P). The sequence is that of Methylthioribose-1-phosphate isomerase from Paracoccidioides brasiliensis (strain Pb03).